A 62-amino-acid polypeptide reads, in one-letter code: Photosystem II reaction center protein Z (62 aa).

Helical transmembrane passes span 8-28 and 41-61; these read ALLALIFVSFALVVGVPVVFA and FSGLSLWLLLVFVVGILNSFV.

This sequence belongs to the PsbZ family. As to quaternary structure, PSII is composed of 1 copy each of membrane proteins PsbA, PsbB, PsbC, PsbD, PsbE, PsbF, PsbH, PsbI, PsbJ, PsbK, PsbL, PsbM, PsbT, PsbY, PsbZ, Psb30/Ycf12, at least 3 peripheral proteins of the oxygen-evolving complex and a large number of cofactors. It forms dimeric complexes.

The protein resides in the plastid. It localises to the chloroplast thylakoid membrane. Functionally, controls the interaction of photosystem II (PSII) cores with the light-harvesting antenna, aiding in the dissipation of excitation energy within PSII. PSII is a light-driven water plastoquinone oxidoreductase, using light energy to abstract electrons from H(2)O, generating a proton gradient subsequently used for ATP formation. This chain is Photosystem II reaction center protein Z, found in Chlamydomonas reinhardtii (Chlamydomonas smithii).